A 100-amino-acid chain; its full sequence is ATP phosphoribosyltransferase (100 aa).

This sequence belongs to the ATP phosphoribosyltransferase family. Long subfamily. Equilibrium between an active dimeric form, an inactive hexameric form and higher aggregates. Interconversion between the various forms is largely reversible and is influenced by the natural substrates and inhibitors of the enzyme. The cofactor is Mg(2+).

The protein localises to the cytoplasm. The catalysed reaction is 1-(5-phospho-beta-D-ribosyl)-ATP + diphosphate = 5-phospho-alpha-D-ribose 1-diphosphate + ATP. The protein operates within amino-acid biosynthesis; L-histidine biosynthesis; L-histidine from 5-phospho-alpha-D-ribose 1-diphosphate: step 1/9. Feedback inhibited by histidine. Functionally, catalyzes the condensation of ATP and 5-phosphoribose 1-diphosphate to form N'-(5'-phosphoribosyl)-ATP (PR-ATP). Has a crucial role in the pathway because the rate of histidine biosynthesis seems to be controlled primarily by regulation of HisG enzymatic activity. The protein is ATP phosphoribosyltransferase (hisG) of Klebsiella pneumoniae.